A 591-amino-acid chain; its full sequence is Aspartate--tRNA(Asp/Asn) ligase (591 aa).

Glu-174 provides a ligand contact to L-aspartate. The segment at 198 to 201 (QLFK) is aspartate. Residue Arg-220 participates in L-aspartate binding. ATP-binding positions include 220-222 (RDE) and Gln-229. Position 450 (His-450) interacts with L-aspartate. Glu-483 is a binding site for ATP. An L-aspartate-binding site is contributed by Arg-490. Residue 535-538 (GLDR) participates in ATP binding.

Belongs to the class-II aminoacyl-tRNA synthetase family. Type 1 subfamily. Homodimer.

Its subcellular location is the cytoplasm. It catalyses the reaction tRNA(Asx) + L-aspartate + ATP = L-aspartyl-tRNA(Asx) + AMP + diphosphate. In terms of biological role, aspartyl-tRNA synthetase with relaxed tRNA specificity since it is able to aspartylate not only its cognate tRNA(Asp) but also tRNA(Asn). Reaction proceeds in two steps: L-aspartate is first activated by ATP to form Asp-AMP and then transferred to the acceptor end of tRNA(Asp/Asn). The chain is Aspartate--tRNA(Asp/Asn) ligase from Pseudomonas aeruginosa (strain LESB58).